The following is a 99-amino-acid chain: MAQIKIEIAYAYPERYYLKKLTVEEGTMIQTAILQSGILQQFTEIDLRENKVGIFSRPAKLTDQLKDGDRIEIYRPLLADPKEIRRKRAEQQAAQAKKK.

Belongs to the UPF0125 (RnfH) family.

In Pasteurella multocida (strain Pm70), this protein is UPF0125 protein PM0166.